The sequence spans 334 residues: Protein-methionine-sulfoxide reductase catalytic subunit MsrP (334 aa).

Positions 1–44 (MKKNQFLKESDITAESVFFMKRRQVLKALGISAAALSLPHAAHA) form a signal peptide, tat-type signal. Residues N88, 91–92 (YE), C146, T181, N233, R238, and 249–251 (GIK) contribute to the Mo-molybdopterin site.

The protein belongs to the MsrP family. In terms of assembly, heterodimer of a catalytic subunit (MsrP) and a heme-binding subunit (MsrQ). Mo-molybdopterin serves as cofactor. Predicted to be exported by the Tat system. The position of the signal peptide cleavage has not been experimentally proven.

The protein resides in the periplasm. It catalyses the reaction L-methionyl-[protein] + a quinone + H2O = L-methionyl-(S)-S-oxide-[protein] + a quinol. It carries out the reaction L-methionyl-[protein] + a quinone + H2O = L-methionyl-(R)-S-oxide-[protein] + a quinol. Part of the MsrPQ system that repairs oxidized periplasmic proteins containing methionine sulfoxide residues (Met-O), using respiratory chain electrons. Thus protects these proteins from oxidative-stress damage caused by reactive species of oxygen and chlorine generated by the host defense mechanisms. MsrPQ is essential for the maintenance of envelope integrity under bleach stress, rescuing a wide series of structurally unrelated periplasmic proteins from methionine oxidation, including the primary periplasmic chaperone SurA and the lipoprotein Pal. The catalytic subunit MsrP is non-stereospecific, being able to reduce both (R-) and (S-) diastereoisomers of methionine sulfoxide. In Shigella dysenteriae serotype 1 (strain Sd197), this protein is Protein-methionine-sulfoxide reductase catalytic subunit MsrP.